Reading from the N-terminus, the 118-residue chain is Small ribosomal subunit protein uS13 (118 aa).

The disordered stretch occupies residues 94–118; the sequence is SLPLRGQRTKTNARTRKGPRKPIKK.

The protein belongs to the universal ribosomal protein uS13 family. Part of the 30S ribosomal subunit. Forms a loose heterodimer with protein S19. Forms two bridges to the 50S subunit in the 70S ribosome.

Functionally, located at the top of the head of the 30S subunit, it contacts several helices of the 16S rRNA. In the 70S ribosome it contacts the 23S rRNA (bridge B1a) and protein L5 of the 50S subunit (bridge B1b), connecting the 2 subunits; these bridges are implicated in subunit movement. Contacts the tRNAs in the A and P-sites. This is Small ribosomal subunit protein uS13 from Vibrio parahaemolyticus serotype O3:K6 (strain RIMD 2210633).